The chain runs to 241 residues: Tetrahydromethanopterin S-methyltransferase subunit A (241 aa).

Residues 1-220 (MAEKKEPAEG…HSGVLAGKIE (220 aa)) are Cytoplasmic-facing. 5-hydroxybenzimidazolylcob(I)amide is bound at residue histidine 85. A helical membrane pass occupies residues 221 to 241 (GIMVGLVLSLFVLGLLLFGGM).

This sequence belongs to the MtrA family. The complex is composed of 8 subunits; MtrA, MtrB, MtrC, MtrD, MtrE, MtrF, MtrG and MtrH. The cofactor is 5-hydroxybenzimidazolylcob(I)amide.

It localises to the cell membrane. The enzyme catalyses 5-methyl-5,6,7,8-tetrahydromethanopterin + coenzyme M + 2 Na(+)(in) = 5,6,7,8-tetrahydromethanopterin + methyl-coenzyme M + 2 Na(+)(out). Its pathway is one-carbon metabolism; methanogenesis from CO(2); methyl-coenzyme M from 5,10-methylene-5,6,7,8-tetrahydromethanopterin: step 2/2. Its function is as follows. Part of a complex that catalyzes the formation of methyl-coenzyme M and tetrahydromethanopterin from coenzyme M and methyl-tetrahydromethanopterin. This is an energy-conserving, sodium-ion translocating step. The polypeptide is Tetrahydromethanopterin S-methyltransferase subunit A (Methanohalobium evestigatum (strain ATCC BAA-1072 / DSM 3721 / NBRC 107634 / OCM 161 / Z-7303)).